The sequence spans 221 residues: Small ribosomal subunit protein eS1 (221 aa).

It belongs to the eukaryotic ribosomal protein eS1 family.

In Pyrobaculum aerophilum (strain ATCC 51768 / DSM 7523 / JCM 9630 / CIP 104966 / NBRC 100827 / IM2), this protein is Small ribosomal subunit protein eS1.